We begin with the raw amino-acid sequence, 419 residues long: F-box/FBD/LRR-repeat protein At4g26340 (419 aa).

The F-box domain occupies 1-53; the sequence is MDRISQLSDDLLLQILSFIPGKDVVATSLLSKRWQSLWMLVSELEYDDSYHTG. LRR repeat units follow at residues 55-81, 132-159, 160-185, 187-208, 226-253, 254-284, and 299-324; these read YKSFSQFVYRSLLSNNAPVIKHLHLNL, TLRLINFVLLDVPSSVCLPSLKVLHLKT, VDYEDDASLPSLLFGCPNLEELFVER, DQDLEMDVTFVVPSLRRLSMID, YLNITDDAVYDVRQIENMPELVEAHVDI, TQGVTHKFLRALTSVRQLSLCLSLSEVMCPS, and VVKGWWDLLTSMLQDSPKLQSLKLID. The FBD domain occupies 339 to 389; sequence GWKLPSSVPECLLFSLEAFEWIGYKGRRGDREVATYVLKNAACLRTAKFSP.

The sequence is that of F-box/FBD/LRR-repeat protein At4g26340 from Arabidopsis thaliana (Mouse-ear cress).